We begin with the raw amino-acid sequence, 153 residues long: MGSFSTITASFLLFLACQLLWQTGANPVYGSVSNADLMDFKNLLDHLEDKMPLEDEVVPPQVLSEQNEEAGAALSPLPEVPPWAGEVNPAQRDGGALGRGSWDSSDRSALLKSKLRALLAAPRSLRRSSCFGGRMDRIGAQSGLGCNSFRYRR.

The first 25 residues, Met1–Ala25, serve as a signal peptide directing secretion. Propeptides lie at residues Asn26–Arg123 and Asp93–Asp103. The disordered stretch occupies residues Val62–Ser104. Ser129 carries the phosphoserine modification. A disulfide bond links Cys130 and Cys146. The tract at residues Asn147 to Tyr151 is important for degradation of atrial natriuretic peptide by IDE.

It belongs to the natriuretic peptide family. Homodimer; disulfide-linked antiparallel dimer. Post-translationally, the precursor molecule is proteolytically cleaved by CORIN at Arg-123 to produce the atrial natriuretic peptide. Undergoes further proteolytic cleavage by unknown proteases to give rise to long-acting natriuretic peptide, vessel dilator and kaliuretic peptide. Additional processing gives rise to the auriculin and atriopeptin peptides. In the kidneys, alternative processing by an unknown protease results in the peptide urodilatin. In terms of processing, cleavage by MME initiates degradation of the factor and thereby regulates its activity. Degradation by IDE results in reduced activation of NPR1 (in vitro). During IDE degradation, the resulting products can temporarily stimulate NPR2 to produce cGMP, before the fragments are completely degraded and inactivated by IDE (in vitro). Degraded by IDE. Post-translationally, phosphorylation on Ser-129 decreases vasorelaxant activity.

It localises to the secreted. The protein resides in the perikaryon. The protein localises to the cell projection. Functionally, hormone that plays a key role in mediating cardio-renal homeostasis, and is involved in vascular remodeling and regulating energy metabolism. Acts by specifically binding and stimulating NPR1 to produce cGMP, which in turn activates effector proteins, such as PRKG1, that drive various biological responses. Regulates vasodilation, natriuresis, diuresis and aldosterone synthesis and is therefore essential for regulating blood pressure, controlling the extracellular fluid volume and maintaining the fluid-electrolyte balance. Also involved in inhibiting cardiac remodeling and cardiac hypertrophy by inducing cardiomyocyte apoptosis and attenuating the growth of cardiomyocytes and fibroblasts. Plays a role in female pregnancy by promoting trophoblast invasion and spiral artery remodeling in uterus, and thus prevents pregnancy-induced hypertension. In adipose tissue, acts in various cGMP- and PKG-dependent pathways to regulate lipid metabolism and energy homeostasis. This includes up-regulating lipid metabolism and mitochondrial oxygen utilization by activating the AMP-activated protein kinase (AMPK), and increasing energy expenditure by acting via MAPK11 to promote the UCP1-dependent thermogenesis of brown adipose tissue. Binds the clearance receptor NPR3 which removes the hormone from circulation. Its function is as follows. May have a role in cardio-renal homeostasis through regulation of natriuresis, diuresis, vasodilation, and inhibiting aldosterone synthesis. In vitro, promotes the production of cGMP and induces vasodilation. May promote natriuresis, at least in part, by enhancing prostaglandin E2 synthesis resulting in the inhibition of renal Na+-K+-ATPase. However reports on the involvement of this peptide in mammal blood volume and blood pressure homeostasis are conflicting; according to a report, in vivo it is not sufficient to activate cGMP and does not inhibit collecting duct transport nor effect diuresis and natriuresis. Appears to bind to specific receptors that are distinct from the receptors bound by atrial natriuretic peptide and vessel dilator. Possibly enhances protein excretion in urine by decreasing proximal tubular protein reabsorption. May have a role in cardio-renal homeostasis through regulation of natriuresis, diuresis, and vasodilation. In vitro, promotes the production of cGMP and induces vasodilation. May promote natriuresis, at least in part, by enhancing prostaglandin E2 synthesis resulting in the inhibition of renal Na+-K+-ATPase. However reports on the involvement of this peptide in mammal blood volume and blood pressure homeostasis are conflicting; according to a report it is not sufficient to activate cGMP and does not inhibit collecting duct transport nor effect diuresis and natriuresis. Appears to bind to specific receptors that are distinct from the receptors bound by the atrial natriuretic and long-acting natriuretic peptides. Possibly functions in protein excretion in urine by maintaining the integrity of the proximal tubules and enhancing protein excretion by decreasing proximal tubular protein reabsorption. In terms of biological role, may have a role in cardio-renal homeostasis through regulation of diuresis and inhibiting aldosterone synthesis. In vitro, promotes the production of cGMP and induces vasodilation. May promote natriuresis, at least in part, by enhancing prostaglandin E2 synthesis resulting in the inhibition of renal Na+-K+-ATPase. May have a role in potassium excretion but not sodium excretion (natriuresis). Possibly enhances protein excretion in urine by decreasing proximal tubular protein reabsorption. Functionally, hormone produced in the kidneys that appears to be important for maintaining cardio-renal homeostasis. Mediates vasodilation, natriuresis and diuresis primarily in the renal system, in order to maintain the extracellular fluid volume and control the fluid-electrolyte balance. Specifically binds and stimulates cGMP production by renal transmembrane receptors, likely NPR1. Urodilatin not ANP, may be the natriuretic peptide responsible for the regulation of sodium and water homeostasis in the kidney. Its function is as follows. May have a role in cardio-renal homeostasis through regulation of natriuresis and vasodilation. In vivo promotes natriuresis and in vitro, vasodilates renal artery strips. May have a role in cardio-renal homeostasis through regulation of regulation of natriuresis and vasodilation. In vivo promotes natriuresis. In vitro, vasodilates intestinal smooth muscle but not smooth muscle strips. In terms of biological role, may have a role in cardio-renal homeostasis through regulation of natriuresis and vasodilation. In vivo promotes natriuresis. In vitro, selectively vasodilates intestinal and vascular smooth muscle strips. Functionally, may have a role in cardio-renal homeostasis through regulation of natriuresis and vasodilation. In vivo promotes natriuresis. In vitro, selectively vasodilates intestinal smooth muscle but not vascular smooth muscle strips. This chain is Natriuretic peptides A (NPPA), found in Felis catus (Cat).